Consider the following 335-residue polypeptide: Proline racemase (335 aa).

The active-site Proton acceptor is cysteine 91. Cysteine 256 (proton donor) is an active-site residue.

The protein belongs to the proline racemase family.

It catalyses the reaction L-proline = D-proline. With respect to regulation, inhibited by pyrrole-2-carboxylate in vitro. In terms of biological role, catalyzes the reversible interconversion of L- and D-proline. Likely functions as the proline racemase necessary for D-proline generation in order to discriminate it from the L-proline used for protein synthesis. The chain is Proline racemase from Acetoanaerobium sticklandii (strain ATCC 12662 / DSM 519 / JCM 1433 / CCUG 9281 / NCIMB 10654 / HF) (Clostridium sticklandii).